Here is a 128-residue protein sequence, read N- to C-terminus: Probable soluble cytochrome b562 2 (128 aa).

The N-terminal stretch at 1–22 (MGKTLMALITAALLSTSSLVMA) is a signal peptide. Residues methionine 29 and histidine 124 each contribute to the heme b site.

The protein belongs to the cytochrome b562 family. Requires heme b as cofactor.

Its subcellular location is the periplasm. In terms of biological role, electron-transport protein of unknown function. This is Probable soluble cytochrome b562 2 (cybC2) from Yersinia pestis.